Consider the following 109-residue polypeptide: Putative pterin-4-alpha-carbinolamine dehydratase (109 aa).

This sequence belongs to the pterin-4-alpha-carbinolamine dehydratase family.

The catalysed reaction is (4aS,6R)-4a-hydroxy-L-erythro-5,6,7,8-tetrahydrobiopterin = (6R)-L-erythro-6,7-dihydrobiopterin + H2O. The polypeptide is Putative pterin-4-alpha-carbinolamine dehydratase (Halorhodospira halophila (strain DSM 244 / SL1) (Ectothiorhodospira halophila (strain DSM 244 / SL1))).